Reading from the N-terminus, the 434-residue chain is Histidinol dehydrogenase (434 aa).

Residues Y130, Q188, and N211 each contribute to the NAD(+) site. S237, Q259, and H262 together coordinate substrate. 2 residues coordinate Zn(2+): Q259 and H262. Active-site proton acceptor residues include E326 and H327. Substrate contacts are provided by H327, D360, E414, and H419. D360 is a Zn(2+) binding site. H419 provides a ligand contact to Zn(2+).

Belongs to the histidinol dehydrogenase family. Homodimer. Zn(2+) serves as cofactor.

It catalyses the reaction L-histidinol + 2 NAD(+) + H2O = L-histidine + 2 NADH + 3 H(+). The protein operates within amino-acid biosynthesis; L-histidine biosynthesis; L-histidine from 5-phospho-alpha-D-ribose 1-diphosphate: step 9/9. Catalyzes the sequential NAD-dependent oxidations of L-histidinol to L-histidinaldehyde and then to L-histidine. The chain is Histidinol dehydrogenase from Shigella dysenteriae serotype 1 (strain Sd197).